The primary structure comprises 210 residues: CASP-like protein 3A2 (210 aa).

At 1–45 (MMMNGQKMAAAEVAVQLPESKMVTENIGGAAAAMRPFGRKAEVMN) the chain is on the cytoplasmic side. Residues 46–66 (VLLRVLCMVTSVAALSSMVTA) traverse the membrane as a helical segment. The Extracellular segment spans residues 67–92 (QQSSTVSIYGFMLPIQSKWSFSHSFE). The chain crosses the membrane as a helical span at residues 93–113 (YVVGVSAVVAAHSLLQLLISV). Topologically, residues 114-128 (SRLLRKSPVIQSRSH) are cytoplasmic. Residues 129 to 149 (AWLVFAGDQVFAYAMISAGAA) form a helical membrane-spanning segment. Residues 150–178 (ASGVTNLNRTGIRHTALPNFCKPLQSFCD) are Extracellular-facing. The N-linked (GlcNAc...) asparagine glycan is linked to N157. A helical membrane pass occupies residues 179-199 (HVAVSIFFTFLSCFLLAASAV). Topologically, residues 200–210 (QEVIWLSRSKY) are cytoplasmic.

It belongs to the Casparian strip membrane proteins (CASP) family. As to quaternary structure, homodimer and heterodimers.

The protein resides in the cell membrane. This chain is CASP-like protein 3A2, found in Populus trichocarpa (Western balsam poplar).